The sequence spans 250 residues: Enoyl-[acyl-carrier-protein] reductase [NADPH] FabL (250 aa).

NADP(+)-binding positions include 13-16 (SRGV), 36-38 (ARS), 62-63 (NV), and Asn89. Active-site proton acceptor residues include Tyr151 and Lys158. NADP(+) is bound by residues Lys158 and 187 to 189 (IDT).

The protein belongs to the short-chain dehydrogenases/reductases (SDR) family. Homotetramer.

It catalyses the reaction a 2,3-saturated acyl-[ACP] + NADP(+) = a (2E)-enoyl-[ACP] + NADPH + H(+). The catalysed reaction is (2E)-butenoyl-[ACP] + NADPH + H(+) = butanoyl-[ACP] + NADP(+). The protein operates within lipid metabolism; fatty acid biosynthesis. With respect to regulation, inhibited by triclosan. Catalyzes the reduction of a carbon-carbon double bond in an enoyl moiety that is covalently linked to an acyl carrier protein (ACP). It confers resistance to triclosan. The chain is Enoyl-[acyl-carrier-protein] reductase [NADPH] FabL (fabL) from Bacillus subtilis (strain 168).